The following is a 130-amino-acid chain: MAQVEYKGTGRRKNSVARVRLVPGEGNITVNERDVRDYLPFESLILDLNQPFDVTETKGNYDVLVNVHGGGFTGQAQAIRHGIARALLEADPEYRGSLKRAGLLTRDPRMKERKKPGLKKARRSPQFSKR.

Residues 98–130 are disordered; it reads LKRAGLLTRDPRMKERKKPGLKKARRSPQFSKR. A compositionally biased stretch (basic residues) spans 111 to 130; sequence KERKKPGLKKARRSPQFSKR.

This sequence belongs to the universal ribosomal protein uS9 family.

The sequence is that of Small ribosomal subunit protein uS9 from Staphylococcus epidermidis (strain ATCC 35984 / DSM 28319 / BCRC 17069 / CCUG 31568 / BM 3577 / RP62A).